Consider the following 308-residue polypeptide: Methionyl-tRNA formyltransferase (308 aa).

109–112 (SLLP) is a binding site for (6S)-5,6,7,8-tetrahydrofolate.

It belongs to the Fmt family.

It catalyses the reaction L-methionyl-tRNA(fMet) + (6R)-10-formyltetrahydrofolate = N-formyl-L-methionyl-tRNA(fMet) + (6S)-5,6,7,8-tetrahydrofolate + H(+). Its function is as follows. Attaches a formyl group to the free amino group of methionyl-tRNA(fMet). The formyl group appears to play a dual role in the initiator identity of N-formylmethionyl-tRNA by promoting its recognition by IF2 and preventing the misappropriation of this tRNA by the elongation apparatus. This Methylococcus capsulatus (strain ATCC 33009 / NCIMB 11132 / Bath) protein is Methionyl-tRNA formyltransferase.